Here is a 181-residue protein sequence, read N- to C-terminus: Large ribosomal subunit protein uL5 (181 aa).

Belongs to the universal ribosomal protein uL5 family. Part of the 50S ribosomal subunit; part of the 5S rRNA/L5/L18/L25 subcomplex. Contacts the 5S rRNA and the P site tRNA. Forms a bridge to the 30S subunit in the 70S ribosome.

Functionally, this is one of the proteins that bind and probably mediate the attachment of the 5S RNA into the large ribosomal subunit, where it forms part of the central protuberance. In the 70S ribosome it contacts protein S13 of the 30S subunit (bridge B1b), connecting the 2 subunits; this bridge is implicated in subunit movement. Contacts the P site tRNA; the 5S rRNA and some of its associated proteins might help stabilize positioning of ribosome-bound tRNAs. This Baumannia cicadellinicola subsp. Homalodisca coagulata protein is Large ribosomal subunit protein uL5.